A 244-amino-acid polypeptide reads, in one-letter code: Lymphotoxin-beta (244 aa).

The Cytoplasmic portion of the chain corresponds to 1-18 (MGALGLEGRGGRLQGRGS). A helical; Signal-anchor for type II membrane protein membrane pass occupies residues 19–48 (LLLAVAGATSLVTLLLAVPITVLAVLALVP). At 49–244 (QDQGGLVTET…KTFFGAVMVG (196 aa)) the chain is on the extracellular side. The region spanning 88–243 (PAAHLIGAPL…GKTFFGAVMV (156 aa)) is the THD domain. The N-linked (GlcNAc...) asparagine glycan is linked to Asn-222.

The protein belongs to the tumor necrosis factor family. As to quaternary structure, heterotrimer of either two LTB and one LTA subunits or (less prevalent) one LTB and two LTA subunits. In terms of tissue distribution, spleen and thymus.

The protein resides in the membrane. In terms of biological role, cytokine that binds to LTBR/TNFRSF3. May play a specific role in immune response regulation. Provides the membrane anchor for the attachment of the heterotrimeric complex to the cell surface. Isoform 2 is probably non-functional. This Homo sapiens (Human) protein is Lymphotoxin-beta (LTB).